The following is a 241-amino-acid chain: Small ribosomal subunit protein uS3 (241 aa).

One can recognise a KH type-2 domain in the interval Met39–Arg107. Residues Ala214–Ala241 are disordered. Basic and acidic residues predominate over residues Ser229–Ala241.

The protein belongs to the universal ribosomal protein uS3 family. In terms of assembly, part of the 30S ribosomal subunit. Forms a tight complex with proteins S10 and S14.

Its function is as follows. Binds the lower part of the 30S subunit head. Binds mRNA in the 70S ribosome, positioning it for translation. This Rhizobium rhizogenes (strain K84 / ATCC BAA-868) (Agrobacterium radiobacter) protein is Small ribosomal subunit protein uS3.